The following is a 66-amino-acid chain: Toxin Os1 (66 aa).

Positions 2–66 constitute an LCN-type CS-alpha/beta domain; it reads RDGYIVQLHN…PIKWLDPKCY (65 aa). Intrachain disulfides connect Cys-12–Cys-65, Cys-16–Cys-37, Cys-22–Cys-47, and Cys-26–Cys-49.

Belongs to the long (4 C-C) scorpion toxin superfamily. Sodium channel inhibitor family. Alpha subfamily. In terms of tissue distribution, expressed by the venom gland.

The protein resides in the secreted. Functionally, alpha toxins bind voltage-independently at site-3 of sodium channels (Nav) and inhibit the inactivation of the activated channels, thereby blocking neuronal transmission. This toxin possesses a high paralytic activity against mice. This Orthochirus scrobiculosus (Central Asian scorpion) protein is Toxin Os1.